A 155-amino-acid polypeptide reads, in one-letter code: Endoribonuclease YbeY (155 aa).

Zn(2+) contacts are provided by His-114, His-118, and His-124.

The protein belongs to the endoribonuclease YbeY family. It depends on Zn(2+) as a cofactor.

The protein resides in the cytoplasm. Its function is as follows. Single strand-specific metallo-endoribonuclease involved in late-stage 70S ribosome quality control and in maturation of the 3' terminus of the 16S rRNA. The sequence is that of Endoribonuclease YbeY from Erwinia tasmaniensis (strain DSM 17950 / CFBP 7177 / CIP 109463 / NCPPB 4357 / Et1/99).